Consider the following 204-residue polypeptide: uncharacterized protein (204 aa).

The first 16 residues, 1 to 16, serve as a signal peptide directing secretion; sequence MKYTFLAVLSAVTVLA.

Its subcellular location is the secreted. This is an uncharacterized protein from Arthroderma benhamiae (strain ATCC MYA-4681 / CBS 112371) (Trichophyton mentagrophytes).